The primary structure comprises 150 residues: UPF0735 ACT domain-containing protein Helmi_18680 (150 aa).

Positions 72–147 constitute an ACT domain; it reads SVSLLLEHHP…GVRSAQLVGS (76 aa).

Belongs to the UPF0735 family.

The sequence is that of UPF0735 ACT domain-containing protein Helmi_18680 from Heliobacterium modesticaldum (strain ATCC 51547 / Ice1).